The following is an 86-amino-acid chain: Large ribosomal subunit protein bL27 (86 aa).

Over residues 1–11 (MATKKAGGGSR) the composition is skewed to gly residues. The tract at residues 1–24 (MATKKAGGGSRNGRDSAGRRLGVK) is disordered.

This sequence belongs to the bacterial ribosomal protein bL27 family.

The polypeptide is Large ribosomal subunit protein bL27 (Rickettsia africae (strain ESF-5)).